A 243-amino-acid chain; its full sequence is MAPRKPKVVSVTKKKKVVEETIKVTVTEEGDPCVITETANDQETQDLTFSIPVGENVTTVEIPVEVPDERSLPVGENVTTVKIPVDDRDESSPQPPETPVEVRDEPSPQPPETPASKSEGTLKKTDKVEKKQENKKKKKKKKRDDLAGDEYRRYVYKVMKQVHPDLGITSKAMTVVNMFMGDMFERIAQEAARLSDYTKRRTLSSREIEAAVRLVLPGELSRHAVAEGSKAVSNFVGYDSRKR.

Ala2 is subject to N,N,N-trimethylalanine; alternate. Ala2 carries the post-translational modification N,N-dimethylalanine; alternate. The residue at position 2 (Ala2) is an N-methylalanine; alternate. Residues 67-145 (PDERSLPVGE…KKKKKKKRDD (79 aa)) form a disordered region. Positions 120–132 (GTLKKTDKVEKKQ) are enriched in basic and acidic residues. The span at 133-142 (ENKKKKKKKK) shows a compositional bias: basic residues.

The protein belongs to the histone H2B family. As to quaternary structure, the nucleosome is a histone octamer containing two molecules each of H2A, H2B, H3 and H4 assembled in one H3-H4 heterotetramer and two H2A-H2B heterodimers. The octamer wraps approximately 147 bp of DNA. In terms of processing, can be acetylated to form H2BK6ac.

The protein resides in the nucleus. It is found in the chromosome. Core component of nucleosome. Nucleosomes wrap and compact DNA into chromatin, limiting DNA accessibility to the cellular machineries which require DNA as a template. Histones thereby play a central role in transcription regulation, DNA repair, DNA replication and chromosomal stability. DNA accessibility is regulated via a complex set of post-translational modifications of histones, also called histone code, and nucleosome remodeling. In Arabidopsis thaliana (Mouse-ear cress), this protein is Histone H2B.2.